The chain runs to 142 residues: Hemoglobin subunit alpha (142 aa).

The Globin domain maps to 2–142; that stretch reads VLSSADKNNV…VSTVLTSKYR (141 aa). At S4 the chain carries Phosphoserine. Residues K8 and K12 each carry the N6-succinyllysine modification. The residue at position 17 (K17) is an N6-acetyllysine; alternate. K17 is modified (N6-succinyllysine; alternate). The residue at position 25 (Y25) is a Phosphotyrosine. S36 is modified (phosphoserine). K41 bears the N6-succinyllysine mark. S50 is subject to Phosphoserine. H59 is an O2 binding site. Heme b is bound at residue H88. S103 bears the Phosphoserine mark. Residue T109 is modified to Phosphothreonine. Phosphoserine is present on S125. Phosphothreonine occurs at positions 135 and 138. Phosphoserine is present on S139.

It belongs to the globin family. In terms of assembly, heterotetramer of two alpha chains and two beta chains. Red blood cells.

Its function is as follows. Involved in oxygen transport from the lung to the various peripheral tissues. In terms of biological role, hemopressin acts as an antagonist peptide of the cannabinoid receptor CNR1. Hemopressin-binding efficiently blocks cannabinoid receptor CNR1 and subsequent signaling. The protein is Hemoglobin subunit alpha (HBA) of Panthera leo (Lion).